Here is a 488-residue protein sequence, read N- to C-terminus: Inosine-5'-monophosphate dehydrogenase (488 aa).

CBS domains lie at 93-149 (VVTD…NQPV) and 153-214 (MTPK…CKDE). NAD(+)-binding positions include Asp248 and 248-250 (DSS). Lys267 bears the N6-acetyllysine mark. 298-300 (GIG) contributes to the NAD(+) binding site. K(+) is bound by residues Gly300 and Gly302. Ser303 is a binding site for IMP. Residue Cys305 participates in K(+) binding. Catalysis depends on Cys305, which acts as the Thioimidate intermediate. Residues 338–340 (DGG), 361–362 (GS), and 385–389 (YRGMG) contribute to the IMP site. Arg401 acts as the Proton acceptor in catalysis. An IMP-binding site is contributed by Glu415. Residue Lys428 is modified to N6-acetyllysine. K(+)-binding residues include Glu469, Ser470, and His471.

It belongs to the IMPDH/GMPR family. As to quaternary structure, homotetramer. It depends on K(+) as a cofactor.

The catalysed reaction is IMP + NAD(+) + H2O = XMP + NADH + H(+). It participates in purine metabolism; XMP biosynthesis via de novo pathway; XMP from IMP: step 1/1. With respect to regulation, mycophenolic acid (MPA) is a non-competitive inhibitor that prevents formation of the closed enzyme conformation by binding to the same site as the amobile flap. In contrast, mizoribine monophosphate (MZP) is a competitive inhibitor that induces the closed conformation. MPA is a potent inhibitor of mammalian IMPDHs but a poor inhibitor of the bacterial enzymes. MZP is a more potent inhibitor of bacterial IMPDH. Its function is as follows. Catalyzes the conversion of inosine 5'-phosphate (IMP) to xanthosine 5'-phosphate (XMP), the first committed and rate-limiting step in the de novo synthesis of guanine nucleotides, and therefore plays an important role in the regulation of cell growth. In Escherichia coli O157:H7, this protein is Inosine-5'-monophosphate dehydrogenase.